The primary structure comprises 469 residues: MKTLILTLLSLYELQLCCGAYNQNIRSQRKFEMIKTEISSYKDVAKSIIDLAVHGKAQNRSYERLALFVDTVGNRMSGSENLKTAIAYMYKSLQEDDLDRVYLEPVKVPHWERGEESAMLLEPRKKSLAILGLGGSIGTPVEGISAEVIVVSSFAELHNRSKEAKGKIVVYNEPFVNYGETVRYRGSGAVEAAKVGAVASLIRSVTPLSVYSPHTGWQWYENDVPKIPTASITVEDAEMLSRMASRGLKIVIQLKMGAVNHPDADSYNTVAEIVGSKYPEQVVIVSGHLDSWDVGQGAMDDGGGAFISWEALSLIKDLGLRPKRTLRLVLWTGEEQGGVGASQYYELHKKNISNIDLVMESDIGTFMPLGMQFTGKPEARAIMTEVMQLLQPINITSLYDYAEGTDINSWMQAGVPGASLFDDISKYFWFHHSQGDTMTVQDPVWMNLCAAVWTVVSYVVADMEEMLPR.

Positions 1–19 (MKTLILTLLSLYELQLCCG) are cleaved as a signal peptide. A propeptide spanning residues 20 to 42 (AYNQNIRSQRKFEMIKTEISSYK) is cleaved from the precursor. Residues N59 and N159 are each glycosylated (N-linked (GlcNAc...) asparagine). H288 and D300 together coordinate Zn(2+). Residue E334 is the Nucleophile of the active site. E335 serves as a coordination point for Zn(2+). N351 is a glycosylation site (N-linked (GlcNAc...) asparagine). Zn(2+) is bound at residue D362. Residue N394 is glycosylated (N-linked (GlcNAc...) asparagine). H432 contributes to the Zn(2+) binding site.

Belongs to the peptidase M28 family. In terms of assembly, homodimer. The monomeric form is inactive while the homodimer is active.

It localises to the endoplasmic reticulum. The protein resides in the golgi apparatus. The protein localises to the lysosome. It is found in the secreted. Its function is as follows. Carboxypeptidase that may play an important role in the hydrolysis of circulating peptides. Catalyzes more efficiently the hydrolysis of dipeptides with unsubstituted terminals into amino acids. In Xenopus laevis (African clawed frog), this protein is Carboxypeptidase Q (cpq).